Here is a 361-residue protein sequence, read N- to C-terminus: Cytochrome c peroxidase, mitochondrial (361 aa).

A mitochondrion-targeting transit peptide spans 1 to 41 (MASAARSASRAFLRSSLRPAVRSSRFALPTQGLRVASRRGY). H122 acts as the Proton acceptor in catalysis. H245 contributes to the heme b binding site. The active-site Tryptophan radical intermediate is W261.

It belongs to the peroxidase family. Cytochrome c peroxidase subfamily. As to quaternary structure, forms a one-to-one complex with cytochrome c. The cofactor is heme b.

The protein localises to the mitochondrion matrix. It is found in the mitochondrion intermembrane space. The catalysed reaction is 2 Fe(II)-[cytochrome c] + H2O2 + 2 H(+) = 2 Fe(III)-[cytochrome c] + 2 H2O. Its function is as follows. Destroys radicals which are normally produced within the cells and which are toxic to biological systems. This chain is Cytochrome c peroxidase, mitochondrial (ccp1), found in Emericella nidulans (strain FGSC A4 / ATCC 38163 / CBS 112.46 / NRRL 194 / M139) (Aspergillus nidulans).